Here is a 682-residue protein sequence, read N- to C-terminus: Penicillin-binding protein activator LpoA (682 aa).

A signal peptide spans 1-26; sequence MLPLNSVRTHAGRLVPVMLAALFLAG. A lipid anchor (N-palmitoyl cysteine) is attached at C27. Residue C27 is the site of S-diacylglycerol cysteine attachment. 2 disordered regions span residues 240-262 and 314-341; these read AKQLPSQLGGTPPAAAAPTTGET and ANNAAAATPGAPAVPSPASSTPSAVSPT. Positions 248–262 are enriched in low complexity; it reads GGTPPAAAAPTTGET.

It belongs to the LpoA family. In terms of assembly, interacts with PBP1a.

It localises to the cell outer membrane. Its function is as follows. Regulator of peptidoglycan synthesis that is essential for the function of penicillin-binding protein 1A (PBP1a). This Dickeya chrysanthemi (strain Ech1591) (Dickeya zeae (strain Ech1591)) protein is Penicillin-binding protein activator LpoA.